The primary structure comprises 154 residues: Protein X (154 aa).

The interval 68 to 117 (PCALRFTSARCMATTVNAHQILPKVLHKRTLGLPAMSTTDLEAYFKDCLF) is mitochondrial targeting sequence.

This sequence belongs to the orthohepadnavirus protein X family. May form homodimer. May interact with host CEBPA, CFLAR, CREB1, DDB1, E4F1, HBXIP, HSPD1/HSP60, NFKBIA, POLR2E and SMAD4. Interacts with host SMC5-SMC6 complex and induces its degradation. Interacts with host TRPC4AP; leading to prevent ubiquitination of TRPC4AP. Interacts with host PLSCR1; this interaction promotes ubiquitination and degradation of HBx and impairs HBx-mediated cell proliferation. A fraction may be phosphorylated in insect cells and HepG2 cells, a human hepatoblastoma cell line. Phosphorylated in vitro by host protein kinase C or mitogen-activated protein kinase. N-acetylated in insect cells.

The protein localises to the host cytoplasm. It is found in the host nucleus. It localises to the host mitochondrion. Multifunctional protein that plays a role in silencing host antiviral defenses and promoting viral transcription. Does not seem to be essential for HBV infection. May be directly involved in development of cirrhosis and liver cancer (hepatocellular carcinoma). Most of cytosolic activities involve modulation of cytosolic calcium. The effect on apoptosis is controversial depending on the cell types in which the studies have been conducted. May induce apoptosis by localizing in mitochondria and causing loss of mitochondrial membrane potential. May also modulate apoptosis by binding host CFLAR, a key regulator of the death-inducing signaling complex (DISC). Promotes viral transcription by using the host E3 ubiquitin ligase DDB1 to target the SMC5-SMC6 complex to proteasomal degradation. This host complex would otherwise bind to viral episomal DNA, and prevents its transcription. Moderately stimulates transcription of many different viral and cellular transcription elements. Promoters and enhancers stimulated by HBx contain DNA binding sites for NF-kappa-B, AP-1, AP-2, c-EBP, ATF/CREB, or the calcium-activated factor NF-AT. This is Protein X from Hepatitis B virus genotype A3 (isolate Cameroon/CMR983/1994) (HBV-A).